The sequence spans 353 residues: Putative transport protein YrrI (353 aa).

8 helical membrane passes run 8–28 (LLLW…FFML), 37–57 (LVIK…YLLL), 77–97 (IYVL…PVLI), 165–185 (FLIA…IELM), 220–240 (LLVC…FGLP), 243–263 (LILG…PFIG), 269–289 (LIAM…VFIL), and 311–331 (VVIM…GMIL).

The protein belongs to the autoinducer-2 exporter (AI-2E) (TC 2.A.86) family.

It is found in the cell membrane. The sequence is that of Putative transport protein YrrI (yrrI) from Bacillus subtilis (strain 168).